The primary structure comprises 493 residues: MNKDVDYQTFKKSLRKEFKKAVKTILNLQAYNGDLIRDFLALYIPYHVVFYNLSIMKKGSPLRIQTNNLLKEALAKILNFNLAMGPKHIIKIMKKDKADPETMNKLKLVLYIKLFQGVFGHVDKNYNLAFQSFRWCLQFIAYSKRTRLFASIADEQIGAFYELCELFISMLCCHCFLIDLKENEALVGNNLKNFIKRQNPNYSHGFDLNEETKSLQWHWSLDEVDVIEALYCVAFDAMDKITLKFSKVNENFVFSQFFQYCAEIEEMLAILRGKIWECECDVFGPRIGLLVDSNHMNETIQKNILSITFKLKNDPQIICCLNKILEGLLLSSGVQFKVIQFFYVLKLYYMQDNEYTFEASSEMDKLTIECLCIIENIIDACDNPDEVTDYQLPKVLLTAMEGKLLVAEKISEDNDCSESLDDYHPRTYQFRHPRIIIDKMKTKLKQKLRFDSPKDPETDDHWIEYWKYCYQDNIGNLPDILSRIYQTFTDPSN.

Interacts with CNM67, SPO21/MPC70 and NUD1.

Its subcellular location is the cytoplasm. The protein localises to the cytoskeleton. It is found in the microtubule organizing center. It localises to the spindle pole body. Functionally, involved in the pathway that organizes the shaping and sizing of the prospore membrane (PSM) during sporulation. May be required to stabilize the outer plaque of the spindle pole body (SPB). The protein is Accumulates dyads protein 4 (ADY4) of Saccharomyces cerevisiae (strain ATCC 204508 / S288c) (Baker's yeast).